Here is a 31-residue protein sequence, read N- to C-terminus: Photosystem II reaction center protein T (31 aa).

The chain crosses the membrane as a helical span at residues 3-23 (ALVYTFLLIGTLGVIFFAIFF).

This sequence belongs to the PsbT family. PSII is composed of 1 copy each of membrane proteins PsbA, PsbB, PsbC, PsbD, PsbE, PsbF, PsbH, PsbI, PsbJ, PsbK, PsbL, PsbM, PsbT, PsbY, PsbZ, Psb30/Ycf12, at least 3 peripheral proteins of the oxygen-evolving complex and a large number of cofactors. It forms dimeric complexes.

It localises to the plastid. It is found in the chloroplast thylakoid membrane. In terms of biological role, found at the monomer-monomer interface of the photosystem II (PS II) dimer, plays a role in assembly and dimerization of PSII. PSII is a light-driven water plastoquinone oxidoreductase, using light energy to abstract electrons from H(2)O, generating a proton gradient subsequently used for ATP formation. The protein is Photosystem II reaction center protein T of Euglena gracilis.